Reading from the N-terminus, the 1918-residue chain is Diacylglycerol kinase eta (1918 aa).

A compositionally biased stretch (basic and acidic residues) spans 1–10 (MAHLKLDTLH). Residues 1-37 (MAHLKLDTLHVQRSPRGSRRSSPSSGRSSACSSGSIS) form a disordered region. Over residues 20 to 37 (RSSPSSGRSSACSSGSIS) the composition is skewed to low complexity. The PH domain occupies 82-175 (AIIKEGFLLK…WLGGLKTATA (94 aa)). Phorbol-ester/DAG-type zinc fingers lie at residues 195–245 (HHHW…IANC) and 268–319 (PHQW…AVAC). A DAGKc domain is found at 350–486 (GNFSPLLVFV…DRWSIMVFEK (137 aa)). Disordered regions lie at residues 783-805 (GANI…NTPT), 1017-1067 (TTLC…DDNP), 1177-1212 (PNTI…GDSI), and 1380-1399 (ERDK…TEEA). The segment covering 1177-1189 (PNTILTTSTSPTK) has biased composition (polar residues). The region spanning 1855 to 1918 (WSVNEVVTWL…LQAIKDLSEN (64 aa)) is the SAM domain.

It belongs to the eukaryotic diacylglycerol kinase family.

The protein localises to the cytoplasm. It carries out the reaction a 1,2-diacyl-sn-glycerol + ATP = a 1,2-diacyl-sn-glycero-3-phosphate + ADP + H(+). Phosphorylates diacylglycerol (DAG) to generate phosphatidic acid (PA). The polypeptide is Diacylglycerol kinase eta (Drosophila erecta (Fruit fly)).